We begin with the raw amino-acid sequence, 4687 residues long: Plectin (4687 aa).

Residues 1 to 1473 are globular 1; sequence MVAGMLMPLD…SELTTLTSQY (1473 aa). Arginine 21 bears the Phosphoserine mark. Valine 26 is subject to Phosphotyrosine. Positions 111-158 are disordered; the sequence is RRRSPHVQTMQGPLGCPPKRGPLPAEDPAREERQVYRRKEREEGAPET. Over residues 137 to 154 the composition is skewed to basic and acidic residues; it reads DPAREERQVYRRKEREEG. Residues 181–406 are actin-binding; it reads DERDRVQKKT…YVSSLYDAMP (226 aa). Calponin-homology (CH) domains lie at 185-288 and 301-406; these read RVQK…LHFK and MTAK…DAMP. One copy of the Spectrin 1 repeat lies at 648–722; sequence LQSTQRRPEL…ERARNDESQL (75 aa). Serine 723 is subject to Phosphoserine. 2 Spectrin repeats span residues 743 to 827 and 840 to 933; these read KLLN…REDH and LQTQ…AIVQ. Position 818 is a phosphothreonine (threonine 818). Positions 944–1001 constitute an SH3 domain; it reads RGHVPLLAVCDYKQVEVTVHKGDQCQLVGPAQPFHWKVLSSSGSEAAVPSVCFLVPPP. The residue at position 1050 (serine 1050) is a Phosphoserine. The stretch at 1318–1418 is one Spectrin 4 repeat; sequence RERVTQLLER…QKFAKQYINA (101 aa). Residue serine 1438 is modified to Phosphoserine. Coiled coils occupy residues 1472 to 1692 and 1724 to 2760; these read QYIK…ERWL and SFAE…TSQA. Residues 1474 to 2758 are central fibrous rod domain; it reads IKFISETLRR…LAHSEEIATS (1285 aa). Residues 1623–1647 form a disordered region; sequence EEAEAQKRQAQEEAERLRRQVQDES. Serine 1724 is subject to Phosphoserine. Lysine 1728 bears the N6-acetyllysine mark. Disordered stretches follow at residues 1741–1764, 1796–1846, 2096–2139, 2164–2188, and 2218–2307; these read VTVT…ERAR, SLAQ…GTAQ, EDTM…AEEE, LRER…KRLQ, and RLRS…DAEM. Basic and acidic residues-rich tracts occupy residues 1801–1839, 2096–2111, and 2119–2131; these read DAEK…KQRQ, EDTM…EAAR, and EEQR…ERVQ. Low complexity predominate over residues 2173–2182; it reads ARQLQLAQEA. The segment covering 2218–2261 has biased composition (basic and acidic residues); it reads RLRSEAEAARRAAEEAEEAREQAEREAAQSRKQVEEAERLKQSA. The span at 2262–2275 shows a compositional bias: low complexity; it reads EEQAQAQAQAQAAA. Residues 2276–2291 are compositionally biased toward basic and acidic residues; the sequence is EKLRKEAEQEAARRAQ. Serine 2634 is subject to Phosphoserine. Lysine 2639 bears the N6-acetyllysine mark. Residues 2671–2710 are disordered; that stretch reads QEEQQRQQQQMEQEKQELVASMEEARRRQREAEEGVRRKQ. Residues 2682–2710 show a composition bias toward basic and acidic residues; it reads EQEKQELVASMEEARRRQREAEEGVRRKQ. The tract at residues 2759-4687 is globular 2; the sequence is QAAATKALPN…SLGGPESAVA (1929 aa). Position 2777 is a phosphoserine (serine 2777). Residue tyrosine 2784 is modified to Phosphotyrosine. Plectin repeat units lie at residues 2791–2828, 2829–2866, 2867–2904, 2905–2942, 2943–2980, and 2984–3018; these read QKVP…REDV, RHYL…PGTA, LILL…PELH, HKLL…RDHG, IRLL…EEMN, and ADPS…PETG. Serine 2805 is modified (phosphoserine). Threonine 2889 carries the post-translational modification Phosphothreonine. Tyrosine 3036 carries the post-translational modification Phosphotyrosine. Residues lysine 3056 and lysine 3094 each carry the N6-acetyllysine modification. 6 Plectin repeats span residues 3119-3156, 3157-3194, 3195-3232, 3233-3270, 3271-3308, and 3311-3346; these read ALVP…ADEV, RQAL…PEVA, VALL…PEMH, EKLL…REQG, LRLL…KETN, and LTSP…QLTG. Tyrosine 3365 is modified (phosphotyrosine). An N6-acetyllysine modification is found at lysine 3423. Plectin repeat units lie at residues 3488–3525, 3526–3563, 3564–3601, 3602–3639, and 3643–3677; these read RTLL…ASTA, TLLL…PELH, EKLL…RDHA, IRLL…EEMN, and ADPS…PETG. Serine 3583 is modified (phosphoserine). Threonine 3788 bears the Phosphothreonine mark. Residue tyrosine 3793 is modified to Phosphotyrosine. 5 Plectin repeats span residues 3823–3860, 3861–3898, 3899–3936, 3937–3974, and 3978–4011; these read WRYL…AEVA, RLLL…PELH, DRLL…AEEA, LRLL…KDTH, and SEPS…DNSG. Threonine 4033 carries the post-translational modification Phosphothreonine. At serine 4057 the chain carries Phosphoserine. Plectin repeat units follow at residues 4066-4103, 4104-4141, 4142-4179, 4180-4217, 4221-4255, and 4268-4308; these read QKFL…PGTA, FELL…PEFK, DKLL…KDHG, IRLL…EEMN, TDPS…PQTG, and RKTS…HQTY. Residues 4253–4303 are binding to intermediate filaments; the sequence is QTGLCLLPLKEKKRERKTSSKSSVRKRRVVIVDPETGKEMSVYEAYRKGLI. Serine 4385, serine 4387, serine 4388, serine 4389, serine 4392, serine 4393, serine 4394, and serine 4395 each carry phosphoserine. Residue tyrosine 4396 is modified to Phosphotyrosine. 2 positions are modified to phosphoserine: serine 4399 and serine 4409. 5 Plectin repeats span residues 4411–4448, 4449–4486, 4487–4524, 4525–4562, and 4563–4600; these read SDPT…NITG, QRLL…KIMV, DRIN…YEAG, QRFL…ARTA, and QKLR…EGTG. A Phosphothreonine modification is found at threonine 4414. A Phosphothreonine; by CDK1 modification is found at threonine 4542. Residues serine 4610 and serine 4616 each carry the phosphoserine modification. A compositionally biased stretch (low complexity) spans 4614–4674; sequence YYSPYSVSGS…SGYGRRYASG (61 aa). Positions 4614-4687 are disordered; the sequence is YYSPYSVSGS…SLGGPESAVA (74 aa). Residue tyrosine 4618 is modified to Phosphotyrosine. Phosphoserine is present on residues serine 4619, serine 4621, and serine 4625. Position 4626 is a phosphothreonine (threonine 4626). The interval 4628-4643 is 4 X 4 AA tandem repeats of G-S-R-X; the sequence is GSRTGSRTGSRAGSRR. Phosphoserine is present on serine 4629. Omega-N-methylarginine occurs at positions 4630 and 4643. Phosphoserine occurs at positions 4645 and 4678.

The protein belongs to the plakin or cytolinker family. In terms of assembly, homodimer or homotetramer. Interacts (via actin-binding domain) with SYNE3. Interacts (via calponin-homology (CH) 1 domain) with VIM (via rod region). Interacts (via N-terminus) with DST isoform 2 (via N-terminus). Interacts with FER. Interacts with TOR1A. Interacts with ANK3. Identified in complexes that contain VIM, EZR, AHNAK, BFSP1, BFSP2, ANK2, PLEC, PRX and spectrin. Post-translationally, phosphorylated by CDK1; regulates dissociation from intermediate filaments during mitosis. Isoform 2 is phosphorylated on Ser-21 and Tyr-26. In terms of tissue distribution, widely expressed with highest expression in skeletal muscle and lowest in thymus.

The protein resides in the cytoplasm. Its subcellular location is the cytoskeleton. It is found in the cell junction. It localises to the hemidesmosome. The protein localises to the cell projection. The protein resides in the podosome. Its function is as follows. Interlinks intermediate filaments with microtubules and microfilaments and anchors intermediate filaments to desmosomes or hemidesmosomes. May be involved not only in the cross-linking and stabilization of cytoskeletal intermediate filaments network, but also in the regulation of their dynamics. This is Plectin (Plec) from Rattus norvegicus (Rat).